The primary structure comprises 338 residues: Nucleoid-associated protein HI_0839 (338 aa).

The protein belongs to the YejK family.

The protein resides in the cytoplasm. It localises to the nucleoid. The polypeptide is Nucleoid-associated protein HI_0839 (Haemophilus influenzae (strain ATCC 51907 / DSM 11121 / KW20 / Rd)).